A 1076-amino-acid chain; its full sequence is DNA-directed RNA polymerase subunit beta (1076 aa).

It belongs to the RNA polymerase beta chain family. In terms of assembly, in plastids the minimal PEP RNA polymerase catalytic core is composed of four subunits: alpha, beta, beta', and beta''. When a (nuclear-encoded) sigma factor is associated with the core the holoenzyme is formed, which can initiate transcription.

The protein resides in the plastid. It is found in the chloroplast. It carries out the reaction RNA(n) + a ribonucleoside 5'-triphosphate = RNA(n+1) + diphosphate. Its function is as follows. DNA-dependent RNA polymerase catalyzes the transcription of DNA into RNA using the four ribonucleoside triphosphates as substrates. The sequence is that of DNA-directed RNA polymerase subunit beta from Hordeum vulgare (Barley).